A 303-amino-acid polypeptide reads, in one-letter code: Probable RuBisCO transcriptional regulator (303 aa).

Residues 6-63 (FTLDQLRIFQAIVVEGSFQKAAQSLYISQPAVSLQIQNLEQQLNAPLFDRSHRKAKLT) form the HTH lysR-type domain. The H-T-H motif DNA-binding region spans 23-42 (FQKAAQSLYISQPAVSLQIQ).

The protein belongs to the LysR transcriptional regulatory family.

The protein resides in the plastid. It localises to the chloroplast. Trans-acting transcriptional regulator of RuBisCO genes (rbcL and rbcS) expression. This chain is Probable RuBisCO transcriptional regulator (rbcR), found in Cyanidioschyzon merolae (strain NIES-3377 / 10D) (Unicellular red alga).